The sequence spans 208 residues: MPVTVVDHPLVRHKLGLLRENNISTKNFRELANEIGRLLTYEATKSLPTEKKTIHGWAGPVEVDQLVGKKITVVPILRAGLGMMDGVVDMIPGVKVSVVGMYRNEETLEPVRYYVKLAKKIHKRHAMILDPMLATGGTLVATINLLKEAGCRRIMGLFLVCAPEGLARLEKEHPDVEVYTAAIDERLNENGYILPGLGDAGDKIFGTK.

5-phospho-alpha-D-ribose 1-diphosphate contacts are provided by residues Arg78, Arg103, and 130–138 (DPMLATGGT). Uracil is bound by residues Ile193 and 198–200 (GDA). Asp199 lines the 5-phospho-alpha-D-ribose 1-diphosphate pocket.

Belongs to the UPRTase family. Requires Mg(2+) as cofactor.

The enzyme catalyses UMP + diphosphate = 5-phospho-alpha-D-ribose 1-diphosphate + uracil. The protein operates within pyrimidine metabolism; UMP biosynthesis via salvage pathway; UMP from uracil: step 1/1. Allosterically activated by GTP. Catalyzes the conversion of uracil and 5-phospho-alpha-D-ribose 1-diphosphate (PRPP) to UMP and diphosphate. The chain is Uracil phosphoribosyltransferase from Solidesulfovibrio magneticus (strain ATCC 700980 / DSM 13731 / RS-1) (Desulfovibrio magneticus).